A 403-amino-acid polypeptide reads, in one-letter code: S-adenosylmethionine synthase (403 aa).

ATP is bound at residue H17. D19 is a Mg(2+) binding site. Position 45 (E45) interacts with K(+). The L-methionine site is built by E58 and Q104. Positions 104-114 are flexible loop; that stretch reads QSPDIAQGVDT. Residues 179–181, 250–251, D259, 265–266, A282, and K286 contribute to the ATP site; these read DGK, KF, and RK. An L-methionine-binding site is contributed by D259. K290 contacts L-methionine.

This sequence belongs to the AdoMet synthase family. Homotetramer; dimer of dimers. The cofactor is Mg(2+). K(+) is required as a cofactor.

Its subcellular location is the cytoplasm. It catalyses the reaction L-methionine + ATP + H2O = S-adenosyl-L-methionine + phosphate + diphosphate. Its pathway is amino-acid biosynthesis; S-adenosyl-L-methionine biosynthesis; S-adenosyl-L-methionine from L-methionine: step 1/1. In terms of biological role, catalyzes the formation of S-adenosylmethionine (AdoMet) from methionine and ATP. The overall synthetic reaction is composed of two sequential steps, AdoMet formation and the subsequent tripolyphosphate hydrolysis which occurs prior to release of AdoMet from the enzyme. This Mycobacterium avium (strain 104) protein is S-adenosylmethionine synthase.